The primary structure comprises 237 residues: Ribonuclease PH (237 aa).

Phosphate-binding positions include Arg-86 and 124–126 (GTR).

The protein belongs to the RNase PH family. In terms of assembly, homohexameric ring arranged as a trimer of dimers.

The catalysed reaction is tRNA(n+1) + phosphate = tRNA(n) + a ribonucleoside 5'-diphosphate. Phosphorolytic 3'-5' exoribonuclease that plays an important role in tRNA 3'-end maturation. Removes nucleotide residues following the 3'-CCA terminus of tRNAs; can also add nucleotides to the ends of RNA molecules by using nucleoside diphosphates as substrates, but this may not be physiologically important. Probably plays a role in initiation of 16S rRNA degradation (leading to ribosome degradation) during starvation. The polypeptide is Ribonuclease PH (Shewanella sp. (strain ANA-3)).